The sequence spans 551 residues: MEEEVPGFYGESGKSVQATLSSLKMLDVGKWPIFSLCSEEELQLIRQACVFGTAGNEVLYTTVNDEIFVLGTNCSGCLGVGDIQSTIEPRRLDSLTGKKIASLSYGSGPHIVLATTDGEVFTWGHNAYSQLGNGTTNHGLVPCHISTNLSNKQVIEVACGSYHSLVLTSDGEVFAWGYNNSGQVGSGSTANQPIPRRVTGCLQNKVVMSIACGQMCSMAVVDTGEVYVWGYNGNGQLGLGSSGNQPTPCRVAALQGIRVQRVACGYAHTLVLTDEGQIYAWGANSYGQLGTGNKSNQSYPTPVVVEKDRIIEIAACHSAHTSAAKSQGGHVYMWGQCRGQSVILPHLTHFCCTDDVFACFATPAVTWRLLSVEPDDHLTVAESLKREFDNPDTADLKFLVDGKYIYAHKVLLKIRCEHFRSSLEDSEDDIVEMSEFSYPVFRAFLEYLYTDNISLPPEEAVGLLDLATFYSETRLKKLCQQTIKQGICEENAIALLSAAVKYDAQDLEEFCFRFCINHLTVVTQTSGFAEMDHDLLKNFISKASRVGAFKN.

6 RCC1 repeats span residues 64-115 (NDEI…VLAT), 117-169 (DGEV…VLTS), 171-222 (GEVF…AVVD), 223-274 (TGEV…VLTD), 276-326 (GQIY…AAKS), and 328-382 (GGHV…TVAE). The 64-residue stretch at 394-457 (ADLKFLVDGK…LYTDNISLPP (64 aa)) folds into the BTB domain.

The protein resides in the cytoplasmic vesicle. It is found in the secretory vesicle. It localises to the acrosome. This chain is RCC1 and BTB domain-containing protein 2 (Rcbtb2), found in Rattus norvegicus (Rat).